The sequence spans 119 residues: Protein FAM24A-like (119 aa).

Positions 1–40 are cleaved as a signal peptide; sequence MYKPFDLRTIITIIIGCGILTAMFLLIGLVLCLYSKISKA.

It belongs to the FAM24 family.

It localises to the secreted. This is Protein FAM24A-like from Mus musculus (Mouse).